The primary structure comprises 820 residues: Leucine--tRNA ligase (820 aa).

The 'HIGH' region signature appears at 40–51 (PYPSGAGLHVGH). The 'KMSKS' region motif lies at 601 to 605 (KMSKS). Position 604 (K604) interacts with ATP.

This sequence belongs to the class-I aminoacyl-tRNA synthetase family.

Its subcellular location is the cytoplasm. The enzyme catalyses tRNA(Leu) + L-leucine + ATP = L-leucyl-tRNA(Leu) + AMP + diphosphate. This is Leucine--tRNA ligase from Chlamydia felis (strain Fe/C-56) (Chlamydophila felis).